The chain runs to 377 residues: Nitric oxide reductase FlRd-NAD(+) reductase (377 aa).

It belongs to the FAD-dependent oxidoreductase family. It depends on FAD as a cofactor.

It localises to the cytoplasm. The enzyme catalyses 2 reduced [nitric oxide reductase rubredoxin domain] + NAD(+) + H(+) = 2 oxidized [nitric oxide reductase rubredoxin domain] + NADH. Its pathway is nitrogen metabolism; nitric oxide reduction. Its function is as follows. One of at least two accessory proteins for anaerobic nitric oxide (NO) reductase. Reduces the rubredoxin moiety of NO reductase. The protein is Nitric oxide reductase FlRd-NAD(+) reductase of Escherichia coli (strain SE11).